The primary structure comprises 277 residues: Phosphonoacetaldehyde hydrolase (277 aa).

Residue D20 is the Nucleophile of the active site. Positions 20 and 22 each coordinate Mg(2+). The active-site Schiff-base intermediate with substrate is the K61. Residue D194 coordinates Mg(2+).

The protein belongs to the HAD-like hydrolase superfamily. PhnX family. As to quaternary structure, homodimer. Mg(2+) serves as cofactor.

It catalyses the reaction phosphonoacetaldehyde + H2O = acetaldehyde + phosphate + H(+). Involved in phosphonate degradation. The sequence is that of Phosphonoacetaldehyde hydrolase from Syntrophobacter fumaroxidans (strain DSM 10017 / MPOB).